Here is a 380-residue protein sequence, read N- to C-terminus: Queuine tRNA-ribosyltransferase (380 aa).

The Proton acceptor role is filled by Asp95. Substrate is bound by residues 95-99, Asp149, Gln192, and Gly219; that span reads DSGGF. An RNA binding region spans residues 250 to 256; that stretch reads GVGSPDS. The Nucleophile role is filled by Asp269. Residues 274–278 form an RNA binding; important for wobble base 34 recognition region; that stretch reads TRIGR. Residues Cys307, Cys309, Cys312, and His338 each coordinate Zn(2+).

It belongs to the queuine tRNA-ribosyltransferase family. As to quaternary structure, homodimer. Within each dimer, one monomer is responsible for RNA recognition and catalysis, while the other monomer binds to the replacement base PreQ1. It depends on Zn(2+) as a cofactor.

It carries out the reaction 7-aminomethyl-7-carbaguanine + guanosine(34) in tRNA = 7-aminomethyl-7-carbaguanosine(34) in tRNA + guanine. Its pathway is tRNA modification; tRNA-queuosine biosynthesis. Its function is as follows. Catalyzes the base-exchange of a guanine (G) residue with the queuine precursor 7-aminomethyl-7-deazaguanine (PreQ1) at position 34 (anticodon wobble position) in tRNAs with GU(N) anticodons (tRNA-Asp, -Asn, -His and -Tyr). Catalysis occurs through a double-displacement mechanism. The nucleophile active site attacks the C1' of nucleotide 34 to detach the guanine base from the RNA, forming a covalent enzyme-RNA intermediate. The proton acceptor active site deprotonates the incoming PreQ1, allowing a nucleophilic attack on the C1' of the ribose to form the product. After dissociation, two additional enzymatic reactions on the tRNA convert PreQ1 to queuine (Q), resulting in the hypermodified nucleoside queuosine (7-(((4,5-cis-dihydroxy-2-cyclopenten-1-yl)amino)methyl)-7-deazaguanosine). The polypeptide is Queuine tRNA-ribosyltransferase (Geobacillus kaustophilus (strain HTA426)).